The following is a 196-amino-acid chain: dITP/XTP pyrophosphatase (196 aa).

Residue 7-12 (THNPGK) coordinates substrate. Positions 40 and 69 each coordinate Mg(2+). Asp-69 serves as the catalytic Proton acceptor. Substrate-binding positions include Ser-70, 150–153 (FGYD), Lys-173, and 178–179 (HR).

It belongs to the HAM1 NTPase family. In terms of assembly, homodimer. Mg(2+) serves as cofactor.

It catalyses the reaction XTP + H2O = XMP + diphosphate + H(+). The catalysed reaction is dITP + H2O = dIMP + diphosphate + H(+). It carries out the reaction ITP + H2O = IMP + diphosphate + H(+). Its function is as follows. Pyrophosphatase that catalyzes the hydrolysis of nucleoside triphosphates to their monophosphate derivatives, with a high preference for the non-canonical purine nucleotides XTP (xanthosine triphosphate), dITP (deoxyinosine triphosphate) and ITP. Seems to function as a house-cleaning enzyme that removes non-canonical purine nucleotides from the nucleotide pool, thus preventing their incorporation into DNA/RNA and avoiding chromosomal lesions. The polypeptide is dITP/XTP pyrophosphatase (Exiguobacterium sp. (strain ATCC BAA-1283 / AT1b)).